A 286-amino-acid chain; its full sequence is uncharacterized protein (286 aa).

The 243-residue stretch at 26–268 folds into the AB hydrolase-1 domain; it reads PLIILCHGFC…DACHYDIYEG (243 aa).

Belongs to the AB hydrolase superfamily.

This is an uncharacterized protein from Escherichia coli.